Consider the following 167-residue polypeptide: uncharacterized protein (167 aa).

This sequence belongs to the A.longa ORF167/ORF288 family.

It localises to the plastid. This is an uncharacterized protein from Euglena longa (Euglenophycean alga).